Reading from the N-terminus, the 88-residue chain is Small ribosomal subunit protein bS20 (88 aa).

A disordered region spans residues 1 to 36; that stretch reads MANTSSAKKATRKIARRTAVNKSRRTQMRGSVRTVE.

Belongs to the bacterial ribosomal protein bS20 family.

Its function is as follows. Binds directly to 16S ribosomal RNA. The sequence is that of Small ribosomal subunit protein bS20 from Rhodopseudomonas palustris (strain HaA2).